The primary structure comprises 368 residues: Protein pxr1 (368 aa).

Disordered stretches follow at residues 1–28 (MGLAAPKNKIKLSHDPNNTRWSGNTDSF) and 161–339 (KEKA…PMGI). Residues 15 to 27 (DPNNTRWSGNTDS) are compositionally biased toward polar residues. Residues 25-79 (TDSFGHRMMKSQGWTPGEYLGAKDAAHAEFHTEANASHIRVVIKDNTLGLGAKIG) enclose the G-patch domain. The span at 168 to 182 (SSEESDSSSDEEEEK) shows a compositional bias: acidic residues. Basic residues-rich tracts occupy residues 209–226 (SKKSKKEKKEKKEKKSKK), 242–254 (KSKKSKKDRKSKS), 271–283 (KARKKEKKEKKRK), and 301–312 (SSKKSKKDKHKS). The span at 313-324 (PSTSKTSTKEST) shows a compositional bias: low complexity. Residues 325 to 334 (PIVSESSGRS) show a composition bias toward polar residues.

It belongs to the PINX1 family.

Its subcellular location is the nucleus. It localises to the nucleolus. Its function is as follows. Involved in rRNA-processing at A0, A1 and A2 sites and negatively regulates telomerase. The polypeptide is Protein pxr1 (pxr1) (Botryotinia fuckeliana (strain B05.10) (Noble rot fungus)).